A 286-amino-acid polypeptide reads, in one-letter code: uncharacterized protein (286 aa).

Disordered stretches follow at residues 1-38 (MSQK…EDDV), 108-146 (HTGE…RRHK), 196-227 (RTQK…KTRL), and 241-286 (DVDD…PRSS). Residues 18 to 29 (SSSKQVLSSTSS) show a composition bias toward low complexity. Positions 243–268 (DDQKKDGSGEEKKEKKSAEKEKKISH) are enriched in basic and acidic residues. The span at 269–278 (ENVQSLSPSS) shows a compositional bias: polar residues.

This is an uncharacterized protein from Caenorhabditis elegans.